The sequence spans 670 residues: Probable ATP-citrate synthase subunit 1 (670 aa).

A disordered region spans residues 1–22 (MPSATTASTNGANGASASPAPG). Residues 257–277 (LLRYQADPDCKILVLLGEVGG) and 308–334 (FKTEVQFGHAGAFANSQLETAATKNKS) contribute to the ATP site. Glu-274 contributes to the Mg(2+) binding site. His-316 acts as the Tele-phosphohistidine intermediate in catalysis. 335–345 (MREAGFYVPDT) is a CoA binding site.

It belongs to the succinate/malate CoA ligase alpha subunit family. In terms of assembly, composed of two subunits.

It localises to the cytoplasm. It catalyses the reaction oxaloacetate + acetyl-CoA + ADP + phosphate = citrate + ATP + CoA. Catalyzes the formation of cytosolic acetyl-CoA, which is mainly used for the biosynthesis of fatty acids and sterols. This Neurospora crassa (strain ATCC 24698 / 74-OR23-1A / CBS 708.71 / DSM 1257 / FGSC 987) protein is Probable ATP-citrate synthase subunit 1.